Consider the following 154-residue polypeptide: Large-conductance mechanosensitive channel (154 aa).

2 consecutive transmembrane segments (helical) span residues 12-32 and 71-91; these read GNIV…ALIT and IVLS…FLVV. The disordered stretch occupies residues 129-154; the sequence is NGAPSGRHVDTADLTPTPNHEPRADT.

Belongs to the MscL family. As to quaternary structure, homopentamer.

It is found in the cell membrane. Channel that opens in response to stretch forces in the membrane lipid bilayer. May participate in the regulation of osmotic pressure changes within the cell. This is Large-conductance mechanosensitive channel from Mycobacterium leprae (strain Br4923).